The sequence spans 89 residues: Small ribosomal subunit protein uS15 (89 aa).

Belongs to the universal ribosomal protein uS15 family. As to quaternary structure, part of the 30S ribosomal subunit. Forms a bridge to the 50S subunit in the 70S ribosome, contacting the 23S rRNA.

Functionally, one of the primary rRNA binding proteins, it binds directly to 16S rRNA where it helps nucleate assembly of the platform of the 30S subunit by binding and bridging several RNA helices of the 16S rRNA. In terms of biological role, forms an intersubunit bridge (bridge B4) with the 23S rRNA of the 50S subunit in the ribosome. This chain is Small ribosomal subunit protein uS15, found in Gluconacetobacter diazotrophicus (strain ATCC 49037 / DSM 5601 / CCUG 37298 / CIP 103539 / LMG 7603 / PAl5).